The sequence spans 266 residues: Cysteine-rich repeat secretory protein 41 (266 aa).

The first 26 residues, methionine 1–serine 26, serve as a signal peptide directing secretion. 2 Gnk2-homologous domains span residues tyrosine 33 to serine 136 and tyrosine 142 to phenylalanine 253.

It belongs to the cysteine-rich repeat secretory protein family.

The protein localises to the secreted. The polypeptide is Cysteine-rich repeat secretory protein 41 (CRRSP41) (Arabidopsis thaliana (Mouse-ear cress)).